The primary structure comprises 945 residues: Netrin receptor UNC5B (945 aa).

An N-terminal signal peptide occupies residues 1–26 (MRARSGVRSALLLALLLCWDPTPSLA). At 27 to 377 (GVDSAGQVLP…LETSGDVALY (351 aa)) the chain is on the extracellular side. In terms of domain architecture, Ig-like spans 48-145 (PYFLLEPQDA…SGTTKSRRAY (98 aa)). Disulfide bonds link C69–C130, C81–C128, C174–C225, C258–C295, C262–C299, C273–C285, C314–C348, C318–C353, and C326–C338. The Ig-like C2-type domain maps to 153–242 (KNFDQEPLAK…KRRSTTATVI (90 aa)). N222 carries an N-linked (GlcNAc...) asparagine glycan. TSP type-1 domains are found at residues 246 to 300 (NGGW…TVCP) and 302 to 354 (DGAW…GLCV). Residue N347 is glycosylated (N-linked (GlcNAc...) asparagine). The chain crosses the membrane as a helical span at residues 378–398 (AGLVVAVFVVVAVLMAVGVIV). Topologically, residues 399–945 (YRRNCRDFDT…LVAMATDGDC (547 aa)) are cytoplasmic. The S-palmitoyl cysteine moiety is linked to residue C403. One can recognise a ZU5 domain in the interval 543–686 (SSVSGTFGCL…LGTYVFMGES (144 aa)). Position 581 is a phosphotyrosine (Y581). The tract at residues 689 to 838 (RSAVKRLQLA…AETPAGSLDA (150 aa)) is UPA domain. An interaction with DCC region spans residues 707–725 (SLEYSLRVYCLEDTPVALK). The 79-residue stretch at 865 to 943 (KICSSLDAPN…EMLVAMATDG (79 aa)) folds into the Death domain.

It belongs to the unc-5 family. As to quaternary structure, interacts with the cytoplasmic part of DCC. Interacts with GNAI2 via its cytoplasmic part. Interacts (via death domain) with DAPK1 (via death domain). Interacts (via extracellular domain) with FLRT2 and FLRT3 (via extracellular domain), but has higher affinity for FLRT3. Identified in a complex with FLRT3 and ADGRL3; does not interact with ADGRL3 by itself. In terms of processing, phosphorylated on cytoplasmic tyrosine residues. Post-translationally, palmitoylation is required for pro-apoptotic activity, but not for location at lipid rafts. Proteolytically cleaved by caspases during apoptosis. The cleavage does not take place when the receptor is associated with netrin ligand. Its cleavage by caspases is required to induce apoptosis. In terms of tissue distribution, highly expressed in brain. Expressed in lung during late development. Expressed during early blood vessel formation, in the semicircular canal and in a dorsal to ventral gradient in the retina.

Its subcellular location is the cell membrane. The protein resides in the membrane raft. Functionally, receptor for netrin required for axon guidance. Mediates axon repulsion of neuronal growth cones in the developing nervous system upon ligand binding. Axon repulsion in growth cones may be caused by its association with DCC that may trigger signaling for repulsion. Functions as a netrin receptor that negatively regulates vascular branching during angiogenesis. Mediates retraction of tip cell filopodia on endothelial growth cones in response to netrin. It also acts as a dependence receptor required for apoptosis induction when not associated with netrin ligand. Mediates apoptosis by activating DAPK1. In the absence of NTN1, activates DAPK1 by reducing its autoinhibitory phosphorylation at Ser-308 thereby increasing its catalytic activity. The protein is Netrin receptor UNC5B (Unc5b) of Mus musculus (Mouse).